We begin with the raw amino-acid sequence, 115 residues long: Vespryn (115 aa).

The signal sequence occupies residues 1–15 (MTWLLLCLLAQYENG). Residues 22-115 (SSSAKPYKTS…VKRKDHLRLT (94 aa)) enclose the B30.2/SPRY domain.

It belongs to the ohanin/vespryn family. In terms of tissue distribution, expressed by the venom gland.

It is found in the secreted. Its function is as follows. Neurotoxin that produces dose-dependent hypolocomotion and hyperalgesia in mice. May directly act on the central nervous system, as it is 6500-fold more potent when administered intracerebroventricularly than intraperitoneal. In Pogona barbata (Bearded dragon), this protein is Vespryn.